A 154-amino-acid chain; its full sequence is uncharacterized protein (154 aa).

3 helical membrane passes run 26 to 48, 97 to 119, and 132 to 150; these read VSGW…GVVT, IAMF…LIVF, and GLYT…YCAW.

It localises to the cell membrane. This is an uncharacterized protein from Archaeoglobus fulgidus (strain ATCC 49558 / DSM 4304 / JCM 9628 / NBRC 100126 / VC-16).